A 426-amino-acid chain; its full sequence is Probable inactive metalloprotease YmfF (426 aa).

Zn(2+) contacts are provided by His50 and Glu138.

Belongs to the peptidase M16 family.

The polypeptide is Probable inactive metalloprotease YmfF (ymfF) (Bacillus subtilis (strain 168)).